Consider the following 211-residue polypeptide: Urease accessory protein UreG (211 aa).

11–18 (GPVGSGKT) provides a ligand contact to GTP.

This sequence belongs to the SIMIBI class G3E GTPase family. UreG subfamily. Homodimer. UreD, UreF and UreG form a complex that acts as a GTP-hydrolysis-dependent molecular chaperone, activating the urease apoprotein by helping to assemble the nickel containing metallocenter of UreC. The UreE protein probably delivers the nickel.

The protein localises to the cytoplasm. Facilitates the functional incorporation of the urease nickel metallocenter. This process requires GTP hydrolysis, probably effectuated by UreG. This chain is Urease accessory protein UreG, found in Photorhabdus laumondii subsp. laumondii (strain DSM 15139 / CIP 105565 / TT01) (Photorhabdus luminescens subsp. laumondii).